Reading from the N-terminus, the 396-residue chain is Elongation factor Tu 2 (396 aa).

The tr-type G domain occupies K10 to K206. Positions G19–T26 are G1. G19–T26 lines the GTP pocket. T26 is a Mg(2+) binding site. The G2 stretch occupies residues G60 to S64. The tract at residues D81–G84 is G3. GTP contacts are provided by residues D81–H85 and N136–D139. The interval N136–D139 is G4. The segment at S174–L176 is G5.

This sequence belongs to the TRAFAC class translation factor GTPase superfamily. Classic translation factor GTPase family. EF-Tu/EF-1A subfamily. As to quaternary structure, monomer.

It localises to the cytoplasm. The catalysed reaction is GTP + H2O = GDP + phosphate + H(+). Its function is as follows. GTP hydrolase that promotes the GTP-dependent binding of aminoacyl-tRNA to the A-site of ribosomes during protein biosynthesis. This chain is Elongation factor Tu 2, found in Ruthia magnifica subsp. Calyptogena magnifica.